We begin with the raw amino-acid sequence, 192 residues long: Peroxiredoxin tpx1 (192 aa).

The Thioredoxin domain maps to 3-161 (LQIGKPAPDF…ALRLLDAFQF (159 aa)). Catalysis depends on Cys48, which acts as the Cysteine sulfenic acid (-SOH) intermediate. Phosphoserine occurs at positions 105 and 148.

Belongs to the peroxiredoxin family. AhpC/Prx1 subfamily. As to quaternary structure, homodimer; disulfide-linked, upon oxidation. Interacts with srx1 in response to oxidative stress. Interacts with pap1 via transient disulfide linkages. Post-translationally, the enzyme can be inactivated by further oxidation of the cysteine sulfenic acid (C(P)-SOH) to sulphinic acid (C(P)-SO2H) instead of its condensation to a disulfide bond. It can be reactivated by forming a transient disulfide bond with sulfiredoxin srx1, which reduces the cysteine sulfinic acid in an ATP- and Mg-dependent manner.

The protein resides in the cytoplasm. Its subcellular location is the nucleus. It carries out the reaction a hydroperoxide + [thioredoxin]-dithiol = an alcohol + [thioredoxin]-disulfide + H2O. Functionally, thiol-specific peroxidase that catalyzes the reduction of hydrogen peroxide and organic hydroperoxides to water and alcohols, respectively. Plays a role in cell protection against oxidative stress by detoxifying peroxides and as sensor of hydrogen peroxide-mediated signaling events. Relays hydrogen peroxide as a signal to the transcription factor pap1 by inducing the formation of intramolecular disulfide bonds in pap1, which causes its nuclear accumulation and activation. Reduced by srx1 and this regulation acts as a molecular switch controlling the transcriptional response to hydrogen peroxide. The sequence is that of Peroxiredoxin tpx1 (tpx1) from Schizosaccharomyces pombe (strain 972 / ATCC 24843) (Fission yeast).